An 840-amino-acid chain; its full sequence is Cullin-4 (840 aa).

The segment covering 1–11 has biased composition (polar residues); that stretch reads MTSGAPPTIST. The disordered stretch occupies residues 1 to 82; it reads MTSGAPPTIS…TGNSSRTTAT (82 aa). Residues 33–48 show a composition bias toward basic and acidic residues; the sequence is TEAKQMRGDTENRSDG. Polar residues predominate over residues 69–82; the sequence is FRSQTGNSSRTTAT. The 60-residue stretch at 772–831 folds into the Cullin neddylation domain; that stretch reads DRQYKIDAAVVRIMKARKQLNHQTLMTELLQQLRFPVSTADIKKRLESLIEREYISRDPE. Lysine 786 participates in a covalent cross-link: Glycyl lysine isopeptide (Lys-Gly) (interchain with G-Cter in NEDD8).

It belongs to the cullin family. Part of an E3 ubiquitin-protein ligase complex including cul-4 and ddb-1. Post-translationally, neddylated. Deneddylated via its interaction with the COP9 signalosome (CSN) complex.

The protein operates within protein modification; protein ubiquitination. Functionally, component of cullin-based E3 ubiquitin-protein ligase complexes which mediate the ubiquitination and subsequent proteasomal degradation of target proteins. The functional specificity of the E3 ubiquitin-protein ligase complex depends on the variable substrate recognition component. In association with ddb-1 directs ubiquitination of cdt-1 during S phase and is required for restraining DNA rereplication. Probably is involved in ubiquitination of cki-1. The chain is Cullin-4 (cul-4) from Caenorhabditis elegans.